The sequence spans 505 residues: Glutamate--cysteine ligase (505 aa).

Belongs to the glutamate--cysteine ligase type 1 family. Type 1 subfamily.

It carries out the reaction L-cysteine + L-glutamate + ATP = gamma-L-glutamyl-L-cysteine + ADP + phosphate + H(+). It participates in sulfur metabolism; glutathione biosynthesis; glutathione from L-cysteine and L-glutamate: step 1/2. The chain is Glutamate--cysteine ligase from Wigglesworthia glossinidia brevipalpis.